The chain runs to 296 residues: Probable AP endonuclease (296 aa).

C16 and C20 form a disulfide bridge. H78, H115, E142, H182, H218, D231, H233, and E271 together coordinate Zn(2+).

The protein belongs to the AP endonuclease 2 family. It depends on Zn(2+) as a cofactor.

The protein resides in the host nucleus. It is found in the host cytoplasm. Its subcellular location is the virion. Functionally, endonuclease that plays a role in DNA repair. Cleaves phosphodiester bonds on the 5' side of apurinic or apyrimidinic sites (AP sites). In addition to endonuclease activity, the ASFV enzyme has a proofreading 3'-5' exonuclease activity that is considerably more efficient in the elimination of a mismatch than in that of a correctly paired base. Displays 3'-phosphatase and 3'-repair diesterase activities. The single nucleotide gaps generated by the AP endonuclease are filled by the viral AP endonuclease and DNA ligase. This chain is Probable AP endonuclease, found in Ornithodoros (relapsing fever ticks).